The following is a 176-amino-acid chain: Ribosome maturation factor RimM (176 aa).

The PRC barrel domain occupies 93–166; the sequence is EGEYYHADLI…RVVIELPAEI (74 aa).

This sequence belongs to the RimM family. Binds ribosomal protein uS19.

The protein localises to the cytoplasm. An accessory protein needed during the final step in the assembly of 30S ribosomal subunit, possibly for assembly of the head region. Essential for efficient processing of 16S rRNA. May be needed both before and after RbfA during the maturation of 16S rRNA. It has affinity for free ribosomal 30S subunits but not for 70S ribosomes. The sequence is that of Ribosome maturation factor RimM from Rhodopseudomonas palustris (strain BisB18).